A 173-amino-acid polypeptide reads, in one-letter code: Bifunctional protein PyrR (173 aa).

Substrate is bound by residues 40-41, 97-105, and R130; these read TR and DDVLYTGRT. The PRPP-binding motif lies at 93–105; it reads VILIDDVLYTGRT.

The protein belongs to the purine/pyrimidine phosphoribosyltransferase family. PyrR subfamily. As to quaternary structure, homodimer and homohexamer; in equilibrium.

It carries out the reaction UMP + diphosphate = 5-phospho-alpha-D-ribose 1-diphosphate + uracil. In terms of biological role, regulates transcriptional attenuation of the pyrimidine nucleotide (pyr) operon by binding in a uridine-dependent manner to specific sites on pyr mRNA. This disrupts an antiterminator hairpin in the RNA and favors formation of a downstream transcription terminator, leading to a reduced expression of downstream genes. Its function is as follows. Also displays a weak uracil phosphoribosyltransferase activity which is not physiologically significant. In Streptococcus pyogenes serotype M6 (strain ATCC BAA-946 / MGAS10394), this protein is Bifunctional protein PyrR.